A 512-amino-acid chain; its full sequence is Plastidal glycolate/glycerate translocator 1, chloroplastic (512 aa).

The transit peptide at 1 to 76 (MATLLATPIF…MNFERKLSVQ (76 aa)) directs the protein to the chloroplast. Residue Ala-77 is modified to N-acetylalanine. The next 12 helical transmembrane spans lie at 93–113 (VIAISHLLVSLGIILAADYFL), 127–147 (ALFGMFCIFSVLMIFDSVVPA), 160–180 (FLFIQRWLPLFYVPSLVVLPL), 195–215 (YIVAGGWLASLCVAGYTAIAV), 238–258 (LELWSWSGIFVVSFVGALFYP), 270–290 (PFLLSSTVLGYIVGSGLPSSI), 293–313 (VFHPIICCALSAVLAALAFGY), 336–356 (AGDILMGFLGSVILSFAFSMF), 367–387 (AEIFTSVIVSTVFSLYSTALV), 398–418 (TVSILPRCITVALALSIVSLF), 425–445 (LTAAVVVVTGLIGANFVQVVL), and 480–500 (LPFCAIAYALTGIFGSLLCSV).

Belongs to the CidB/LrgB family. In terms of tissue distribution, expressed in leaves, stems and flowers, but not in roots.

The protein localises to the plastid. The protein resides in the chloroplast membrane. Its function is as follows. Glycolate/glycerate transporter required for photorespiration. The polypeptide is Plastidal glycolate/glycerate translocator 1, chloroplastic (PLGG1) (Arabidopsis thaliana (Mouse-ear cress)).